Consider the following 275-residue polypeptide: MSSTPSNQNIIPLIKKESIVSLFEKGTRQDGRKLTDYRPLSITLNYAKKADGSALVKLGTTMVLAGTKLEIDKPYEDTPNQGNLIVNVELLPLAYETFEPGPPDENAIELARVVDRSLRDSKALDLTKLVIEPGKSVWTVWLDVYVLDYGGNVLDACTLASVAALYNTKVYKVEQDSNGFRVNKNEVVGKLPLNHPVVTVSIAKVDKYLIVDPDLDEESIMDTKVSFSYTPDLKIVGIQKSGKGSMSLQDIDQAENTARLVAVKLLEELKKQLGI.

Belongs to the RNase PH family. Rrp42 subfamily. Component of the archaeal exosome complex. Forms a hexameric ring-like arrangement composed of 3 Rrp41-Rrp42 heterodimers. The hexameric ring associates with a trimer of Rrp4 and/or Csl4 subunits.

It is found in the cytoplasm. Its function is as follows. Non-catalytic component of the exosome, which is a complex involved in RNA degradation. Contributes to the structuring of the Rrp41 active site. The protein is Exosome complex component Rrp42 of Saccharolobus islandicus (strain Y.N.15.51 / Yellowstone #2) (Sulfolobus islandicus).